A 162-amino-acid chain; its full sequence is Cytochrome c-type biogenesis protein CcmE (162 aa).

The Cytoplasmic segment spans residues 1–8; sequence MNPRRKKR. A helical; Signal-anchor for type II membrane protein transmembrane segment spans residues 9 to 29; it reads LTLAVALIGGVAAITSLLLYA. Topologically, residues 30-162 are periplasmic; sequence LNSNLNLFYT…YSQQKAPDTK (133 aa). Heme-binding residues include histidine 131 and tyrosine 135. The segment at 142 to 162 is disordered; it reads EAMGQKHEKLDYSQQKAPDTK. The span at 153 to 162 shows a compositional bias: polar residues; the sequence is YSQQKAPDTK.

It belongs to the CcmE/CycJ family.

The protein resides in the cell inner membrane. Its function is as follows. Heme chaperone required for the biogenesis of c-type cytochromes. Transiently binds heme delivered by CcmC and transfers the heme to apo-cytochromes in a process facilitated by CcmF and CcmH. The polypeptide is Cytochrome c-type biogenesis protein CcmE (Shewanella baltica (strain OS223)).